We begin with the raw amino-acid sequence, 152 residues long: UPF0178 protein YaiI (152 aa).

This sequence belongs to the UPF0178 family.

The polypeptide is UPF0178 protein YaiI (Shigella flexneri).